We begin with the raw amino-acid sequence, 171 residues long: tRNA-splicing endonuclease (171 aa).

Catalysis depends on residues Y110, H117, and K148.

This sequence belongs to the tRNA-intron endonuclease family. Archaeal short subfamily. Homotetramer; although the tetramer contains four active sites, only two participate in the cleavage. Therefore, it should be considered as a dimer of dimers.

It catalyses the reaction pretRNA = a 3'-half-tRNA molecule with a 5'-OH end + a 5'-half-tRNA molecule with a 2',3'-cyclic phosphate end + an intron with a 2',3'-cyclic phosphate and a 5'-hydroxyl terminus.. Its function is as follows. Endonuclease that removes tRNA introns. Cleaves pre-tRNA at the 5'- and 3'-splice sites to release the intron. The products are an intron and two tRNA half-molecules bearing 2',3' cyclic phosphate and 5'-OH termini. Recognizes a pseudosymmetric substrate in which 2 bulged loops of 3 bases are separated by a stem of 4 bp. The sequence is that of tRNA-splicing endonuclease from Thermococcus onnurineus (strain NA1).